Reading from the N-terminus, the 89-residue chain is Small ribosomal subunit protein uS15 (89 aa).

This sequence belongs to the universal ribosomal protein uS15 family. Part of the 30S ribosomal subunit. Forms a bridge to the 50S subunit in the 70S ribosome, contacting the 23S rRNA.

In terms of biological role, one of the primary rRNA binding proteins, it binds directly to 16S rRNA where it helps nucleate assembly of the platform of the 30S subunit by binding and bridging several RNA helices of the 16S rRNA. Its function is as follows. Forms an intersubunit bridge (bridge B4) with the 23S rRNA of the 50S subunit in the ribosome. The polypeptide is Small ribosomal subunit protein uS15 (Nitratiruptor sp. (strain SB155-2)).